The sequence spans 813 residues: Probable receptor-like protein kinase At5g39020 (813 aa).

Residues 1 to 21 (MNCNVLFLLSVLVSVTAGVTA) form the signal peptide. Residues 22–437 (AYHPTDVFLF…TPPIKGKPHV (416 aa)) lie on the Extracellular side of the membrane. 10 N-linked (GlcNAc...) asparagine glycosylation sites follow: N46, N61, N165, N202, N213, N263, N286, N293, N384, and N401. Residues 438–458 (LVIILIVVGSVIGLATFIVII) form a helical membrane-spanning segment. Topologically, residues 459–813 (MLLIRQMKRK…QTQTLDSTII (355 aa)) are cytoplasmic. Residues 496 to 771 (KSFSHTVGKG…KVVEMIEGSL (276 aa)) form the Protein kinase domain. ATP-binding positions include 502-510 (VGKGGFGTV) and K524. The active-site Proton acceptor is the D619. The tract at residues 791 to 813 (ESSSLSDGQEAEKQTQTLDSTII) is disordered. Positions 804–813 (QTQTLDSTII) are enriched in polar residues.

The protein belongs to the protein kinase superfamily. Ser/Thr protein kinase family.

It is found in the membrane. This chain is Probable receptor-like protein kinase At5g39020, found in Arabidopsis thaliana (Mouse-ear cress).